The chain runs to 1072 residues: MPGEEEERAFLVAREELASALRRDSGQAFSLEQLRPLLASSLPLAARYLQLDAARLVRCNAHGEPRNYLNTLSTALNILEKYGRNLLSPQRPRYWRGVKFNNPVFRSTVDAVQGGRDVLRLYGYTEEQPDGLSFPEGQEEPDEHQVATVTLEVLLLRTELSLLLQNTHPRQQALEQLLEDKVEDDMLQLSEFDPLLREIAPGPLTTPSVPGSTPGPCFLCGSAPGTLHCPSCKQALCPACDHLFHGHPSRAHHLRQTLPGVLQGTHLSPSLPASAQPRPQSTSLLALGDSSLSSPNPASAHLPWHCAACAMLNEPWAVLCVACDRPRGCKGLGLGTEGPQGTGGLEPDLARGRWACQSCTFENEAAAVLCSICERPRLAQPPSLVVDSRDAGICLQPLQQGDALLASAQSQVWYCIHCTFCNSSPGWVCVMCNRTSSPIPAQHAPRPYASSLEKGPPKPGPPRRLSAPLPSSCGDPEKQRQDKMREEGLQLVSMIREGEAAGACPEEIFSALQYSGTEVPLQWLRSELPYVLEMVAELAGQQDPGLGAFSCQEARRAWLDRHGNLDEAVEECVRTRRRKVQELQSLGFGPEEGSLQALFQHGGDVSRALTELQRQRLEPFRQRLWDSGPEPTPSWDGPDKQSLVRRLLAVYALPSWGRAELALSLLQETPRNYELGDVVEAVRHSQDRAFLRRLLAQECAVCGWALPHNRMQALTSCECTICPDCFRQHFTIALKEKHITDMVCPACGRPDLTDDTQLLSYFSTLDIQLRESLEPDAYALFHKKLTEGVLMRDPKFLWCAQCSFGFIYEREQLEATCPQCHQTFCVRCKRQWEEQHRGRSCEDFQNWKRMNDPEYQAQGLAMYLQENGIDCPKCKFSYALARGGCMHFHCTQCRHQFCSGCYNAFYAKNKCPEPNCRVKKSLHGHHPRDCLFYLRDWTALRLQKLLQDNNVMFNTEPPAGARAVPGGGCRVIEQKEVPNGLRDEACGKETPAGYAGLCQAHYKEYLVSLINAHSLDPATLYEVEELETATERYLHVRPQPLAGEDPPAYQARLLQKLTEEVPLGQSIPRRRK.

The polyubiquitin-binding stretch occupies residues 1 to 485 (MPGEEEERAF…PEKQRQDKMR (485 aa)). Residues 71 to 142 (TLSTALNILE…SFPEGQEEPD (72 aa)) enclose the PUB domain. The tract at residues 263–290 (QGTHLSPSLPASAQPRPQSTSLLALGDS) is disordered. Residues 265–280 (THLSPSLPASAQPRPQ) show a composition bias toward polar residues. A compositionally biased stretch (low complexity) spans 281–290 (STSLLALGDS). 2 consecutive RanBP2-type zinc fingers follow at residues 299–329 (SAHL…PRGC) and 350–379 (ARGR…PRLA). Ser383 carries the post-translational modification Phosphoserine. Residues 409–438 (QSQVWYCIHCTFCNSSPGWVCVMCNRTSSP) form a RanBP2-type 3 zinc finger. The segment at 443 to 484 (HAPRPYASSLEKGPPKPGPPRRLSAPLPSSCGDPEKQRQDKM) is disordered. Over residues 463–472 (RRLSAPLPSS) the composition is skewed to low complexity. Residue Ser466 is modified to Phosphoserine. Over residues 475–484 (DPEKQRQDKM) the composition is skewed to basic and acidic residues. The tract at residues 563-616 (GNLDEAVEECVRTRRRKVQELQSLGFGPEEGSLQALFQHGGDVSRALTELQRQR) is interaction with RBCK1. The UBA domain maps to 564–615 (NLDEAVEECVRTRRRKVQELQSLGFGPEEGSLQALFQHGGDVSRALTELQRQ). The interval 695–929 (LAQECAVCGW…KSLHGHHPRD (235 aa)) is TRIAD supradomain. The Zn(2+) site is built by Cys699, Cys702, Cys717, Cys719, Cys722, and Cys725. An RING-type 1 zinc finger spans residues 699–749 (CAVCGWALPHNRMQALTSCECTICPDCFRQHFTIALKEKHITDMVCPACGR). Lys735 participates in a covalent cross-link: (Microbial infection) Glycyl lysine isopeptide (Lys-Gly) (interchain with G-Cter in ubiquitin). Zn(2+)-binding residues include Cys744 and Cys747. The IBR-type zinc-finger motif lies at 779–841 (ALFHKKLTEG…WEEQHRGRSC (63 aa)). Lys783 participates in a covalent cross-link: (Microbial infection) Glycyl lysine isopeptide (Lys-Gly) (interchain with G-Cter in ubiquitin). Zn(2+) contacts are provided by Cys799, Cys802, Cys817, Cys820, Cys825, Cys828, His836, Cys841, Cys871, and Cys874. The RING-type 2; atypical zinc finger occupies 871 to 901 (CPKCKFSYALARGGCMHFHCTQCRHQFCSGC). A (Microbial infection) Glycyl lysine isopeptide (Lys-Gly) (interchain with G-Cter in ubiquitin) cross-link involves residue Lys875. Cys885 is a catalytic residue. Zn(2+) contacts are provided by Cys890, Cys893, Cys898, Cys901, Cys916, and His925. Residues 910–1072 (KCPEPNCRVK…LGQSIPRRRK (163 aa)) form an LDD domain region.

The protein belongs to the RBR family. As to quaternary structure, component of the LUBAC complex (linear ubiquitin chain assembly complex) which consists of SHARPIN, RBCK1 and RNF31. LUBAC has a MW of approximately 600 kDa suggesting a heteromultimeric assembly of its subunits. Associates with the TNF-R1 signaling complex (TNF-RSC) in a stimulation-dependent manner. Interacts (via the PUB domain) with OTULIN (via the PIM motif); the interaction is direct. Interacts (via the PUB domain) with VCP (via the PIM motif). Interacts (via the PUB domain) with SPATA2 (via the PIM motif); interaction is direct and bridges RNF31 and CYLD. Interacts with CYLD; the interaction is indirect and is mediated via SPATA2. Interacts with MUSK. Interacts with CARD11, promoting linear ubiquitination of BCL10. (Microbial infection) Interacts with S.flexneri E3 ubiquitin-protein ligases IpaH1.4 and IpaH2.5, leading to its ubiquitination. In terms of processing, autoubiquitinated. Interaction with OTULIN is required to suppress formation of 'Met-1'-linked polyubiquitin chains and prevent subsequent inactivation of the LUBAC complex. Cleaved by caspase during apoptosis. Post-translationally, (Microbial infection) Ubiquitinated by S.flexneri E3 ubiquitin-protein ligases IpaH1.4 and IpaH2.5, leading to its degradation by the proteasome, thereby preventing formation of the bacterial ubiquitin coat and activation of innate immunity. Expressed in both normal and transformed breast epithelial cell lines.

It localises to the cytoplasm. The enzyme catalyses [E2 ubiquitin-conjugating enzyme]-S-ubiquitinyl-L-cysteine + [acceptor protein]-L-lysine = [E2 ubiquitin-conjugating enzyme]-L-cysteine + [acceptor protein]-N(6)-ubiquitinyl-L-lysine.. The protein operates within protein modification; protein ubiquitination. In terms of biological role, E3 ubiquitin-protein ligase component of the LUBAC complex which conjugates linear ('Met-1'-linked) polyubiquitin chains to substrates and plays a key role in NF-kappa-B activation and regulation of inflammation. LUBAC conjugates linear polyubiquitin to IKBKG and RIPK1 and is involved in activation of the canonical NF-kappa-B and the JNK signaling pathways. Linear ubiquitination mediated by the LUBAC complex interferes with TNF-induced cell death and thereby prevents inflammation. LUBAC is recruited to the TNF-R1 signaling complex (TNF-RSC) following polyubiquitination of TNF-RSC components by BIRC2 and/or BIRC3 and to conjugate linear polyubiquitin to IKBKG and possibly other components contributing to the stability of the complex. The LUBAC complex is also involved in innate immunity by conjugating linear polyubiquitin chains at the surface of bacteria invading the cytosol to form the ubiquitin coat surrounding bacteria. LUBAC is not able to initiate formation of the bacterial ubiquitin coat, and can only promote formation of linear polyubiquitins on pre-existing ubiquitin. Recruited to the surface of bacteria by RNF213, which initiates the bacterial ubiquitin coat. The bacterial ubiquitin coat acts as an 'eat-me' signal for xenophagy and promotes NF-kappa-B activation. Together with OTULIN, the LUBAC complex regulates the canonical Wnt signaling during angiogenesis. RNF31 is required for linear ubiquitination of BCL10, thereby promoting TCR-induced NF-kappa-B activation. Binds polyubiquitin of different linkage types. The protein is E3 ubiquitin-protein ligase RNF31 of Homo sapiens (Human).